We begin with the raw amino-acid sequence, 261 residues long: Methylmalonyl-CoA decarboxylase (261 aa).

Residues 64–68, Gly110, Thr132, and Lys253 contribute to the substrate site; that span reads AGHDI.

It belongs to the enoyl-CoA hydratase/isomerase family. Dimer of homotrimers.

It carries out the reaction (R)-methylmalonyl-CoA + H(+) = propanoyl-CoA + CO2. Catalyzes the decarboxylation of (R)-methylmalonyl-CoA to propionyl-CoA. Could be part of a pathway that converts succinate to propanoate. The protein is Methylmalonyl-CoA decarboxylase (scpB) of Escherichia coli (strain K12).